An 89-amino-acid polypeptide reads, in one-letter code: UPF0297 protein SMU_2079c (89 aa).

This sequence belongs to the UPF0297 family.

The protein is UPF0297 protein SMU_2079c of Streptococcus mutans serotype c (strain ATCC 700610 / UA159).